Consider the following 359-residue polypeptide: Histidinol-phosphate aminotransferase (359 aa).

Position 212 is an N6-(pyridoxal phosphate)lysine (Lys212).

The protein belongs to the class-II pyridoxal-phosphate-dependent aminotransferase family. Histidinol-phosphate aminotransferase subfamily. Homodimer. Pyridoxal 5'-phosphate is required as a cofactor.

The catalysed reaction is L-histidinol phosphate + 2-oxoglutarate = 3-(imidazol-4-yl)-2-oxopropyl phosphate + L-glutamate. Its pathway is amino-acid biosynthesis; L-histidine biosynthesis; L-histidine from 5-phospho-alpha-D-ribose 1-diphosphate: step 7/9. This chain is Histidinol-phosphate aminotransferase, found in Buchnera aphidicola subsp. Melaphis rhois.